Reading from the N-terminus, the 366-residue chain is Chorismate synthase (366 aa).

Residue Arg-48 participates in NADP(+) binding. FMN contacts are provided by residues 125–127 (RSS), 241–242 (NA), Gly-285, 300–304 (KPTSS), and Arg-326.

The protein belongs to the chorismate synthase family. Homotetramer. The cofactor is FMNH2.

It carries out the reaction 5-O-(1-carboxyvinyl)-3-phosphoshikimate = chorismate + phosphate. It participates in metabolic intermediate biosynthesis; chorismate biosynthesis; chorismate from D-erythrose 4-phosphate and phosphoenolpyruvate: step 7/7. Its function is as follows. Catalyzes the anti-1,4-elimination of the C-3 phosphate and the C-6 proR hydrogen from 5-enolpyruvylshikimate-3-phosphate (EPSP) to yield chorismate, which is the branch point compound that serves as the starting substrate for the three terminal pathways of aromatic amino acid biosynthesis. This reaction introduces a second double bond into the aromatic ring system. The protein is Chorismate synthase of Roseobacter denitrificans (strain ATCC 33942 / OCh 114) (Erythrobacter sp. (strain OCh 114)).